A 673-amino-acid chain; its full sequence is Putative potassium transport system protein Kup 1 (673 aa).

A run of 13 helical transmembrane segments spans residues 14 to 34, 58 to 78, 101 to 121, 147 to 167, 175 to 195, 196 to 216, 220 to 240, 252 to 272, 294 to 314, 345 to 365, 374 to 394, 403 to 423, and 427 to 447; these read GAGFIIAMGIVYGDIGTSPLY, LSLIIWTLTLITTVKYVWIAL, WLIIPAMIGGAALLSDGALTP, LPIVIITLAILAILFLIQRFG, FGPVMFIWFSFLGITGLINLF, GDFSVLQAINPYWAIHLLLSP, AGIFVLGSVFLATTGAEALYS, VSWPFVKVCIILSYCGQAAWL, LIIFSVVLATLAAIIASQALI, LYIPAVNLGLWLAASFIVVYF, AYGLAITVTMLMTTILLTVYL, VFVVLFFGAFIFIEGLFFAAS, and FLHGGYVVVILAALILFVMAI.

The protein belongs to the HAK/KUP transporter (TC 2.A.72) family.

It localises to the cell membrane. The catalysed reaction is K(+)(in) + H(+)(in) = K(+)(out) + H(+)(out). Its function is as follows. Transport of potassium into the cell. Likely operates as a K(+):H(+) symporter. The protein is Putative potassium transport system protein Kup 1 of Lactococcus lactis subsp. cremoris (strain MG1363).